Here is a 309-residue protein sequence, read N- to C-terminus: Probable lipid kinase YegS-like (309 aa).

In terms of domain architecture, DAGKc spans 1-134 (MAPSHWRLIL…IDLLRIDADH (134 aa)). Residues T39, 65–71 (GDGTLSE), and T96 each bind ATP. Mg(2+)-binding residues include L219, D222, and L224. The active-site Proton acceptor is E280.

Belongs to the diacylglycerol/lipid kinase family. YegS lipid kinase subfamily. Mg(2+) is required as a cofactor. The cofactor is Ca(2+).

It is found in the cytoplasm. In terms of biological role, probably phosphorylates lipids; the in vivo substrate is unknown. This is Probable lipid kinase YegS-like from Xanthomonas campestris pv. campestris (strain 8004).